Reading from the N-terminus, the 265-residue chain is Undecaprenyl-diphosphatase (265 aa).

Transmembrane regions (helical) follow at residues 42–62, 82–102, 108–128, 143–163, 181–201, 221–241, and 248–264; these read ATTF…VLYW, GIML…AAHS, LFTP…MLLV, MSPA…WPGF, GLAA…ATGY, GFVV…ALVG, and FAWY…YFMA.

Belongs to the UppP family.

It is found in the cell inner membrane. The catalysed reaction is di-trans,octa-cis-undecaprenyl diphosphate + H2O = di-trans,octa-cis-undecaprenyl phosphate + phosphate + H(+). Catalyzes the dephosphorylation of undecaprenyl diphosphate (UPP). Confers resistance to bacitracin. This Nitratidesulfovibrio vulgaris (strain ATCC 29579 / DSM 644 / CCUG 34227 / NCIMB 8303 / VKM B-1760 / Hildenborough) (Desulfovibrio vulgaris) protein is Undecaprenyl-diphosphatase.